Consider the following 400-residue polypeptide: Iron(III) enterobactin esterase (400 aa).

Belongs to the Fes family.

The protein localises to the cytoplasm. It catalyses the reaction Fe(III)-enterobactin + 3 H2O + H(+) = Fe(III)-[N-(2,3-dihydroxybenzoyl)-L-serine] + 2 N-(2,3-dihydroxybenzoyl)-L-serine. The enzyme catalyses Fe(III)-enterobactin + H2O = Fe(III)-[N-(2,3-dihydroxybenzoyl)-L-serine]3 + H(+). It carries out the reaction Fe(III)-[N-(2,3-dihydroxybenzoyl)-L-serine]3 + H2O + H(+) = Fe(III)-[N-(2,3-dihydroxybenzoyl)-L-serine]2 + N-(2,3-dihydroxybenzoyl)-L-serine. The catalysed reaction is Fe(III)-[N-(2,3-dihydroxybenzoyl)-L-serine]2 + H2O + H(+) = Fe(III)-[N-(2,3-dihydroxybenzoyl)-L-serine] + N-(2,3-dihydroxybenzoyl)-L-serine. It catalyses the reaction enterobactin + 3 H2O = 3 N-(2,3-dihydroxybenzoyl)-L-serine + 2 H(+). In terms of biological role, catalyzes the hydrolysis of ferric enterobactin (Fe-Ent). Is responsible for the release of iron from ferric enterobactin. Also catalyzes the hydrolysis of iron-free enterobactin (Ent). Hydrolyzes ferric monoglucosyl-C-Ent (Fe-MGE) poorly and does not hydrolyze ferric diglucosyl-C-Ent (Fe-DGE) or ferric triglucosyl-C-Ent (Fe-TGE) at all. Also hydrolyzes apo MGE, but catalyzes the hydrolysis of apo DGE very poorly, and does not process apo TGE at all. The catalytic efficiency for processing Fe-Ent is much higher than that for apo Ent, suggesting that Fe-Ent is the physiological substrate. This chain is Iron(III) enterobactin esterase, found in Escherichia coli O6:H1 (strain CFT073 / ATCC 700928 / UPEC).